The sequence spans 60 residues: Mating pheromone En-2 (60 aa).

4 disulfide bridges follow: cysteine 11–cysteine 39, cysteine 24–cysteine 35, cysteine 31–cysteine 57, and cysteine 36–cysteine 48.

Its subcellular location is the secreted. In terms of biological role, mating ciliate pheromones (or gamones) are diffusible extracellular communication signals that distinguish different intraspecific classes of cells commonly referred to as 'mating types'. They prepare the latter for conjugation by changing their cell surface properties. This chain is Mating pheromone En-2, found in Euplotes nobilii (Ciliate).